The sequence spans 287 residues: Proteasome subunit alpha (287 aa).

The disordered stretch occupies residues G241–T287. The span at A262–G275 shows a compositional bias: low complexity. The segment covering G276 to T287 has biased composition (gly residues).

It belongs to the peptidase T1A family. The 20S proteasome core is composed of 14 alpha and 14 beta subunits that assemble into four stacked heptameric rings, resulting in a barrel-shaped structure. The two inner rings, each composed of seven catalytic beta subunits, are sandwiched by two outer rings, each composed of seven alpha subunits. The catalytic chamber with the active sites is on the inside of the barrel. Has a gated structure, the ends of the cylinder being occluded by the N-termini of the alpha-subunits. Is capped by the proteasome-associated ATPase, ARC.

Its subcellular location is the cytoplasm. The protein operates within protein degradation; proteasomal Pup-dependent pathway. With respect to regulation, the formation of the proteasomal ATPase ARC-20S proteasome complex, likely via the docking of the C-termini of ARC into the intersubunit pockets in the alpha-rings, may trigger opening of the gate for substrate entry. Interconversion between the open-gate and close-gate conformations leads to a dynamic regulation of the 20S proteasome proteolysis activity. Its function is as follows. Component of the proteasome core, a large protease complex with broad specificity involved in protein degradation. The sequence is that of Proteasome subunit alpha from Geodermatophilus obscurus (strain ATCC 25078 / DSM 43160 / JCM 3152 / CCUG 61914 / KCC A-0152 / KCTC 9177 / NBRC 13315 / NRRL B-3577 / G-20).